Reading from the N-terminus, the 180-residue chain is Shikimate kinase (180 aa).

Residue 14–19 (GAGKST) coordinates ATP. Serine 18 provides a ligand contact to Mg(2+). Residues aspartate 36, arginine 60, and glycine 82 each coordinate substrate. Arginine 120 lines the ATP pocket. A substrate-binding site is contributed by arginine 140. Glutamine 157 is a binding site for ATP.

It belongs to the shikimate kinase family. As to quaternary structure, monomer. Requires Mg(2+) as cofactor.

It localises to the cytoplasm. It catalyses the reaction shikimate + ATP = 3-phosphoshikimate + ADP + H(+). It functions in the pathway metabolic intermediate biosynthesis; chorismate biosynthesis; chorismate from D-erythrose 4-phosphate and phosphoenolpyruvate: step 5/7. In terms of biological role, catalyzes the specific phosphorylation of the 3-hydroxyl group of shikimic acid using ATP as a cosubstrate. The chain is Shikimate kinase from Haemophilus influenzae (strain PittGG).